We begin with the raw amino-acid sequence, 452 residues long: BUB3-interacting and GLEBS motif-containing protein ZNF207 (452 aa).

The tract at residues 1-92 (MGRKKKKQLK…EGIPEKDMEE (92 aa)) is microtubule-binding region. 2 consecutive C2H2-type zinc fingers follow at residues 11-34 (PWCW…KAKH) and 35-58 (FKCH…MQVH). Disordered stretches follow at residues 99–131 (QKTQ…SFQQ) and 298–330 (STMS…TSAT). Positions 113–123 (DDSDYDDDDDT) are enriched in acidic residues. The GLEBS stretch occupies residues 329 to 361 (ATSKLVHPDEDISLEEKRAQLPKYQRNLPRPGQ).

In terms of assembly, interacts (via GLEBS region) with bub3.

The protein localises to the nucleus. It localises to the chromosome. It is found in the centromere. Its subcellular location is the kinetochore. The protein resides in the cytoplasm. The protein localises to the cytoskeleton. It localises to the spindle. Functionally, kinetochore- and microtubule-binding protein that plays a key role in spindle assembly. Znf207/BuGZ is mainly composed of disordered low-complexity regions and undergoes phase transition or coacervation to form temperature-dependent liquid droplets. Coacervation promotes microtubule bundling and concentrates tubulin, promoting microtubule polymerization and assembly of spindle and spindle matrix by concentrating its building blocks. The sequence is that of BUB3-interacting and GLEBS motif-containing protein ZNF207 from Xenopus laevis (African clawed frog).